The following is a 317-amino-acid chain: Transaldolase (317 aa).

K132 acts as the Schiff-base intermediate with substrate in catalysis.

It belongs to the transaldolase family. Type 1 subfamily. As to quaternary structure, homodimer.

The protein resides in the cytoplasm. The enzyme catalyses D-sedoheptulose 7-phosphate + D-glyceraldehyde 3-phosphate = D-erythrose 4-phosphate + beta-D-fructose 6-phosphate. It participates in carbohydrate degradation; pentose phosphate pathway; D-glyceraldehyde 3-phosphate and beta-D-fructose 6-phosphate from D-ribose 5-phosphate and D-xylulose 5-phosphate (non-oxidative stage): step 2/3. Its function is as follows. Transaldolase is important for the balance of metabolites in the pentose-phosphate pathway. This chain is Transaldolase, found in Yersinia pseudotuberculosis serotype O:1b (strain IP 31758).